The following is a 376-amino-acid chain: N,N'-diacetylbacillosaminyl-diphospho-undecaprenol alpha-1,3-N-acetylgalactosaminyltransferase (376 aa).

It belongs to the glycosyltransferase group 1 family.

It catalyses the reaction N,N'-diacetyl-alpha-D-bacillosaminyl-tri-trans,hepta-cis-undecaprenyl diphosphate + UDP-N-acetyl-alpha-D-galactosamine = N-acetyl-alpha-D-galactosaminyl-(1-&gt;3)-N,N'-diacetyl-alpha-D-bacillosaminyl-tri-trans,hepta-cis-undecaprenyl diphosphate + UDP + H(+). It participates in protein modification; protein glycosylation. Adds the first GalNAc residue on to the isoprenoid-linked bacillosamine (2,4-diacetamido-2,4,6-trideoxyglucose) carrier in the N-linked protein glycosylation pathway. Acts first on the undecaprenylpyrophosphate-linked bacillosamine (Und-PP-Bac) substrate to yield the disaccharide. The chain is N,N'-diacetylbacillosaminyl-diphospho-undecaprenol alpha-1,3-N-acetylgalactosaminyltransferase (pglA) from Campylobacter jejuni subsp. jejuni serotype O:2 (strain ATCC 700819 / NCTC 11168).